Consider the following 284-residue polypeptide: MSARILDGKAMADTILAVIHDKVAEREVQGKRRPGLAVILVGGDPASAVYVRNKKRACERAGVNSVSHDLPETTTQPELLALIDTLNSDAAIDGILVQLPLPVHIDAETVIERIRPDKDVDGFHPYNIGRLAVKMPTLRPSTPRGIMTLLRATNEELRGKNAVMVGASNIVGRPMSLELLLAGCTITVCHSATRDLESFVRSAEVLVVGVGRPRMIPGDWVREGAIVIDVGINRLADGKLVGDVDFDTAVERAGWITPVPGGVGPMTVATLLENTLEAALMHNP.

NADP(+)-binding positions include 166 to 168 (GAS), Ser191, and Ile232.

Belongs to the tetrahydrofolate dehydrogenase/cyclohydrolase family. In terms of assembly, homodimer.

It carries out the reaction (6R)-5,10-methylene-5,6,7,8-tetrahydrofolate + NADP(+) = (6R)-5,10-methenyltetrahydrofolate + NADPH. The catalysed reaction is (6R)-5,10-methenyltetrahydrofolate + H2O = (6R)-10-formyltetrahydrofolate + H(+). It functions in the pathway one-carbon metabolism; tetrahydrofolate interconversion. Its function is as follows. Catalyzes the oxidation of 5,10-methylenetetrahydrofolate to 5,10-methenyltetrahydrofolate and then the hydrolysis of 5,10-methenyltetrahydrofolate to 10-formyltetrahydrofolate. In Thiobacillus denitrificans (strain ATCC 25259 / T1), this protein is Bifunctional protein FolD.